The chain runs to 376 residues: N-acetyldiaminopimelate deacetylase (376 aa).

D69 is an active-site residue. Catalysis depends on E128, which acts as the Proton acceptor.

The protein belongs to the peptidase M20A family. N-acetyldiaminopimelate deacetylase subfamily.

It carries out the reaction N-acetyl-(2S,6S)-2,6-diaminopimelate + H2O = (2S,6S)-2,6-diaminopimelate + acetate. It participates in amino-acid biosynthesis; L-lysine biosynthesis via DAP pathway; LL-2,6-diaminopimelate from (S)-tetrahydrodipicolinate (acetylase route): step 3/3. Its function is as follows. Catalyzes the conversion of N-acetyl-diaminopimelate to diaminopimelate and acetate. The polypeptide is N-acetyldiaminopimelate deacetylase (Streptococcus uberis (strain ATCC BAA-854 / 0140J)).